Here is a 130-residue protein sequence, read N- to C-terminus: Phosphoribosyl-AMP cyclohydrolase (130 aa).

Mg(2+) is bound at residue Asp-78. Cys-79 contributes to the Zn(2+) binding site. The Mg(2+) site is built by Asp-80 and Asp-82. Cys-96 and Cys-103 together coordinate Zn(2+).

This sequence belongs to the PRA-CH family. As to quaternary structure, homodimer. It depends on Mg(2+) as a cofactor. The cofactor is Zn(2+).

It is found in the cytoplasm. The enzyme catalyses 1-(5-phospho-beta-D-ribosyl)-5'-AMP + H2O = 1-(5-phospho-beta-D-ribosyl)-5-[(5-phospho-beta-D-ribosylamino)methylideneamino]imidazole-4-carboxamide. It functions in the pathway amino-acid biosynthesis; L-histidine biosynthesis; L-histidine from 5-phospho-alpha-D-ribose 1-diphosphate: step 3/9. Its function is as follows. Catalyzes the hydrolysis of the adenine ring of phosphoribosyl-AMP. The protein is Phosphoribosyl-AMP cyclohydrolase of Methylobacillus flagellatus (strain ATCC 51484 / DSM 6875 / VKM B-1610 / KT).